A 339-amino-acid polypeptide reads, in one-letter code: DNA-directed RNA polymerase subunit alpha (339 aa).

An alpha N-terminal domain (alpha-NTD) region spans residues 1–237 (MENELMYMNW…EQMNVFINFD (237 aa)). The tract at residues 256-339 (FNENLYRSVN…PPAEDNKEGE (84 aa)) is alpha C-terminal domain (alpha-CTD).

The protein belongs to the RNA polymerase alpha chain family. Homodimer. The RNAP catalytic core consists of 2 alpha, 1 beta, 1 beta' and 1 omega subunit. When a sigma factor is associated with the core the holoenzyme is formed, which can initiate transcription.

It carries out the reaction RNA(n) + a ribonucleoside 5'-triphosphate = RNA(n+1) + diphosphate. Its function is as follows. DNA-dependent RNA polymerase catalyzes the transcription of DNA into RNA using the four ribonucleoside triphosphates as substrates. This chain is DNA-directed RNA polymerase subunit alpha, found in Desulfosudis oleivorans (strain DSM 6200 / JCM 39069 / Hxd3) (Desulfococcus oleovorans).